The sequence spans 86 residues: Large ribosomal subunit protein bL27 (86 aa).

Residues 1-10 show a composition bias toward gly residues; that stretch reads MAQKKGGGST. The tract at residues 1–21 is disordered; it reads MAQKKGGGSTRNGRDSESKRL.

It belongs to the bacterial ribosomal protein bL27 family.

The polypeptide is Large ribosomal subunit protein bL27 (Ralstonia nicotianae (strain ATCC BAA-1114 / GMI1000) (Ralstonia solanacearum)).